A 374-amino-acid chain; its full sequence is Isopentenyl-diphosphate delta-isomerase (374 aa).

Position 13-14 (13-14) interacts with substrate; that stretch reads RK. FMN contacts are provided by residues 71–73, Ser-104, and Asn-132; that span reads GMT. 104–106 is a binding site for substrate; that stretch reads SQR. Gln-171 contacts substrate. Glu-172 contacts Mg(2+). Residues Lys-203, Thr-233, 282-284, and 303-304 each bind FMN; these read GMR and AL.

It belongs to the IPP isomerase type 2 family. Homooctamer. Dimer of tetramers. The cofactor is FMN. Requires NADPH as cofactor. Mg(2+) serves as cofactor.

It is found in the cytoplasm. It carries out the reaction isopentenyl diphosphate = dimethylallyl diphosphate. In terms of biological role, involved in the biosynthesis of isoprenoids. Catalyzes the 1,3-allylic rearrangement of the homoallylic substrate isopentenyl (IPP) to its allylic isomer, dimethylallyl diphosphate (DMAPP). This Thermococcus kodakarensis (strain ATCC BAA-918 / JCM 12380 / KOD1) (Pyrococcus kodakaraensis (strain KOD1)) protein is Isopentenyl-diphosphate delta-isomerase.